A 158-amino-acid chain; its full sequence is Transcription elongation factor GreB (158 aa).

Residues 53–75 (KRRLREIDRRVRFLTKRLEVLQI) are a coiled coil.

The protein belongs to the GreA/GreB family. GreB subfamily.

Functionally, necessary for efficient RNA polymerase transcription elongation past template-encoded arresting sites. The arresting sites in DNA have the property of trapping a certain fraction of elongating RNA polymerases that pass through, resulting in locked ternary complexes. Cleavage of the nascent transcript by cleavage factors such as GreA or GreB allows the resumption of elongation from the new 3'terminus. GreB releases sequences of up to 9 nucleotides in length. The sequence is that of Transcription elongation factor GreB from Haemophilus influenzae (strain ATCC 51907 / DSM 11121 / KW20 / Rd).